Here is a 148-residue protein sequence, read N- to C-terminus: Vascular endothelial growth factor homolog (148 aa).

The signal sequence occupies residues 1–25 (MKLTATLQVVVALLICMYNLPECVS). 3 disulfide bridges follow: Cys46/Cys88, Cys77/Cys130, and Cys81/Cys132. An N-linked (GlcNAc...) asparagine; by host glycan is attached at Asn95.

Belongs to the PDGF/VEGF growth factor family. In terms of assembly, homodimer; disulfide-linked.

Its subcellular location is the secreted. In terms of biological role, induces endothelial proliferation. In Orf virus (strain NZ7) (OV NZ-7), this protein is Vascular endothelial growth factor homolog.